The primary structure comprises 136 residues: UPF0216 protein PH0358 (136 aa).

Belongs to the UPF0216 family.

The polypeptide is UPF0216 protein PH0358 (Pyrococcus horikoshii (strain ATCC 700860 / DSM 12428 / JCM 9974 / NBRC 100139 / OT-3)).